Reading from the N-terminus, the 102-residue chain is Carboxysome shell protein CcmK2 (102 aa).

The BMC domain maps to alanine 4–proline 90.

This sequence belongs to the bacterial microcompartments protein family. CcmK subfamily. In terms of assembly, homohexamer. Interacts with CcmO in the carboxysome. Interacts with CcmN.

It is found in the carboxysome. Functionally, one of the shell proteins of the carboxysome, a polyhedral inclusion where RuBisCO (ribulose bisphosphate carboxylase, rbcL-rbcS) is sequestered. Assembles into hexamers which make sheets that form the facets of the polyhedral carboxysome. The hexamer central pore probably regulates metabolite flux. Its function is as follows. The major shell protein of the carboxysome, a polyhedral inclusion where RuBisCO (ribulose bisphosphate carboxylase, rbcL-rbcS) is sequestered. Hexamers make sheets that form the facets of the polyhedral carboxysome. The shell is 4.5 nm thick, as observed for CcmK hexamers. Required for recruitment of CcmO to the pre-carboxysome. In PCC 7942 there are several CcmK paralogs with presumably functional differences; replacing the central pore residues (34-37) with those of either CcmK4 from this organism (Tyr-Met-Arg-Ala) or from an alpha-type carboxysome forming cyanobacterium (CsoS1 of P.marinus strain MIT 9313, Arg-Glu-Phe-Val) allows the bacterium to make carboxysomes, but the expression level is too low to know if the carboxysome is functional for CO(2) fixation. In terms of biological role, beta-carboxysome assembly initiates when soluble RuBisCO is condensed into a liquid matrix in a pre-carboxysome by the RbcS-like domains of probably both CcmM58 and CcmM35. CcmN interacts with the N-terminus of CcmM58, and then recruits the CcmK2 major shell protein via CcmN's encapsulation peptide. Shell formation requires CcmK proteins and CcmO. CcmL caps the otherwise elongated carboxysome. Once fully encapsulated carboxysomes are formed, they migrate within the cell probably via interactions with the cytoskeleton. This is Carboxysome shell protein CcmK2 from Synechococcus elongatus (strain ATCC 33912 / PCC 7942 / FACHB-805) (Anacystis nidulans R2).